The sequence spans 317 residues: Pantothenate kinase (317 aa).

101 to 108 is an ATP binding site; that stretch reads GSVAVGKS.

It belongs to the prokaryotic pantothenate kinase family.

It is found in the cytoplasm. The catalysed reaction is (R)-pantothenate + ATP = (R)-4'-phosphopantothenate + ADP + H(+). Its pathway is cofactor biosynthesis; coenzyme A biosynthesis; CoA from (R)-pantothenate: step 1/5. The polypeptide is Pantothenate kinase (Actinobacillus succinogenes (strain ATCC 55618 / DSM 22257 / CCUG 43843 / 130Z)).